The sequence spans 363 residues: MRVDLFDFDLPEESIALRPAEPRDHARLLRVRPGQPFEDRQVFELPDLLQPGDALVFNDTKVIPAQLEGMRERDGNISQVSATLHMRTGPDRWKAFLRPGKRVKEGDRIRFGHSGSSCFLGTLDATVAEKGDAGEALLVFDLSGAMLDEAIASVGHIPLPPYIASKRAEDERDRKDYQTVYAREEGAVAAPTAGLHFTPDLLEKIKAKGVEEHFVTLHVGAGTFLPVKADDTTDHKMHSEIGYVSQRTADALNAVHERGGKIICVGTTSLRLIESAAGEDGIIRPWAGATDIFITPGYKFRAVDLLMTNFHLPRSTLFMLVSAFSGFETMHAAYEHAISNGYRFYSYGDASLLERADKAKDTA.

The protein belongs to the QueA family. As to quaternary structure, monomer.

The protein resides in the cytoplasm. It carries out the reaction 7-aminomethyl-7-carbaguanosine(34) in tRNA + S-adenosyl-L-methionine = epoxyqueuosine(34) in tRNA + adenine + L-methionine + 2 H(+). The protein operates within tRNA modification; tRNA-queuosine biosynthesis. Functionally, transfers and isomerizes the ribose moiety from AdoMet to the 7-aminomethyl group of 7-deazaguanine (preQ1-tRNA) to give epoxyqueuosine (oQ-tRNA). The chain is S-adenosylmethionine:tRNA ribosyltransferase-isomerase from Brucella anthropi (strain ATCC 49188 / DSM 6882 / CCUG 24695 / JCM 21032 / LMG 3331 / NBRC 15819 / NCTC 12168 / Alc 37) (Ochrobactrum anthropi).